A 64-amino-acid chain; its full sequence is H/ACA ribonucleoprotein complex subunit 3 (64 aa).

It belongs to the NOP10 family. Component of the box H/ACA small nucleolar ribonucleoprotein (H/ACA snoRNP) complex consisting of Nop60B, Gar1, NPH2 and Nop10, and associated with H/ACA-type snoRNAs.

The protein resides in the nucleus. It is found in the nucleolus. In terms of biological role, component of the box H/ACA small nucleolar ribonucleoprotein (H/ACA snoRNP) complex, which catalyzes pseudouridylation of rRNA. This involves the isomerization of uridine such that the ribose is subsequently attached to C5, instead of the normal N1. Pseudouridine ('psi') residues may serve to stabilize the conformation of rRNAs. Required for ribosome biogenesis. H/ACA snoRNP complex-dependent ribosome biogenesis is important in female germline cell differentiation during oogenesis. This chain is H/ACA ribonucleoprotein complex subunit 3, found in Drosophila melanogaster (Fruit fly).